The sequence spans 488 residues: Wax ester synthase/diacylglycerol acyltransferase 8 (488 aa).

Residues 1 to 195 (MKNEEEEPLS…AIFTIGSTMR (195 aa)) are Cytoplasmic-facing. The active-site Proton acceptor is His-135. The helical transmembrane segment at 196–214 (LIWNTLVDMFLLFATMLFL) threads the bilayer. Residues 215–488 (KDTKTPLKGG…RGLLKEAYKV (274 aa)) are Lumenal-facing. Asn-238, Asn-252, Asn-353, and Asn-397 each carry an N-linked (GlcNAc...) asparagine glycan.

In the N-terminal section; belongs to the long-chain O-acyltransferase family. Mostly expressed in flowers and siliques and at low levels in stems.

The protein resides in the cell membrane. It localises to the endoplasmic reticulum membrane. The catalysed reaction is an acyl-CoA + a 1,2-diacyl-sn-glycerol = a triacyl-sn-glycerol + CoA. The enzyme catalyses a long chain fatty alcohol + a fatty acyl-CoA = a wax ester + CoA. It functions in the pathway glycerolipid metabolism; triacylglycerol biosynthesis. The protein operates within lipid metabolism. Functionally, bifunctional wax ester synthase/diacylglycerol acyltransferase. Involved in cuticular wax biosynthesis. The sequence is that of Wax ester synthase/diacylglycerol acyltransferase 8 from Arabidopsis thaliana (Mouse-ear cress).